A 686-amino-acid polypeptide reads, in one-letter code: CAI-1 autoinducer sensor kinase/phosphatase CqsS (686 aa).

The next 6 helical transmembrane spans lie at 21–41, 47–64, 77–97, 100–120, 124–144, and 152–172; these read LVGW…EYWF, NLGL…LVFR, GYFL…MMLM, WSTI…LLVH, VMAL…YGLT, and IEWQ…LCFF. In terms of domain architecture, Histidine kinase spans 191–416; sequence GIAHEMRNPL…EFVLSFPRYD (226 aa). The residue at position 194 (His-194) is a Phosphohistidine; by autocatalysis. The Response regulatory domain occupies 569-686; the sequence is RILVVDDNQS…VLLNKVAAWV (118 aa). Residue Asp-618 is modified to 4-aspartylphosphate.

The protein resides in the cell membrane. It carries out the reaction ATP + protein L-histidine = ADP + protein N-phospho-L-histidine.. Its function is as follows. Senses the quorum-sensing autoinducer CAI-1 ((S)-3-hydroxytridecan-4-one) which probably functions as an intragenus signal. The sensory signal is then relayed to LuxU and LuxO. This Vibrio cholerae serotype O1 (strain ATCC 39315 / El Tor Inaba N16961) protein is CAI-1 autoinducer sensor kinase/phosphatase CqsS (cqsS).